Consider the following 1419-residue polypeptide: Myosin-2B (1419 aa).

One can recognise a Myosin N-terminal SH3-like domain in the interval 4–57 (EVGTRCWYPNSEAGWIGCEVTKNDFQDGTYHIELTSETGLVIPIETKHLESNNA). In terms of domain architecture, Myosin motor spans 75 to 780 (EATHDLTTLS…VLAYLEKIRS (706 aa)). An ATP-binding site is contributed by 169–176 (GESGAGKT). Residues 451-531 (FIGVLDIYGF…LGILSLLDEE (81 aa)) are actin-binding. 6 consecutive IQ domains span residues 783–805 (VTEL…LYLQ), 806–830 (AMLS…DFEM), 831–854 (KTDA…VFET), 855–878 (LKNI…QREF), 879–901 (ESRS…RYQT), and 902–931 (LKTG…QAES). Positions 909–940 (IQALVRRKQSQEKLKQLKIQAESAASLKNSAA) form a coiled coil. The non alpha-helical, tail domain stretch occupies residues 1061–1419 (KDNERTSTSS…VIKELGSLLA (359 aa)). Residues 1143–1357 (HSILKQTVQD…LNHLSNTARR (215 aa)) form the Dilute domain.

It belongs to the TRAFAC class myosin-kinesin ATPase superfamily. Myosin family. Homodimer. Interacts with calmodulin (CMD1) and the myosin light chain MLC1 through its IQ repeats.

Functionally, myosin heavy chain that is required for the cell cycle-regulated transport of various organelles and proteins for their segregation. Functions by binding with its tail domain to receptor proteins on organelles and exerting force with its N-terminal motor domain against actin filaments, thereby transporting its cargo along polarized actin cables. This Naumovozyma castellii (Yeast) protein is Myosin-2B (MYO2B).